We begin with the raw amino-acid sequence, 454 residues long: Response regulator PleD (454 aa).

2 consecutive Response regulatory domains span residues 4-120 (RILV…RSLT) and 155-269 (RVLI…KTQI). Mg(2+) contacts are provided by aspartate 9, aspartate 10, aspartate 53, and methionine 55. Aspartate 53 is subject to 4-aspartylphosphate. One can recognise a GGDEF domain in the interval 319–454 (DPVSALLIDI…GRNAVVGKAA (136 aa)). Substrate-binding residues include asparagine 335 and aspartate 344. Glutamate 370 (proton acceptor) is an active-site residue.

As to quaternary structure, homodimer. Inactive monomer in solution. Post-translationally, phosphorylated by PleC and DivJ. Phosphorylation stimulates cyclase activity.

Its subcellular location is the cytoplasm. The enzyme catalyses 2 GTP = 3',3'-c-di-GMP + 2 diphosphate. It functions in the pathway purine metabolism; 3',5'-cyclic di-GMP biosynthesis. Allosterically inhibited by the product c-di-GMP. Response regulator that is part of a signal transduction pathway controlling cell differentiation in the swarmer-to-stalked cell transition. Its function is as follows. Catalyzes the condensation of two GTP molecules to the cyclic dinucleotide di-GMP (c-di-GMP), which acts as a secondary messenger. The polypeptide is Response regulator PleD (pleD) (Caulobacter vibrioides (strain ATCC 19089 / CIP 103742 / CB 15) (Caulobacter crescentus)).